Consider the following 104-residue polypeptide: Pyrimidine/purine nucleoside phosphorylase (104 aa).

The protein belongs to the nucleoside phosphorylase PpnP family.

It carries out the reaction a purine D-ribonucleoside + phosphate = a purine nucleobase + alpha-D-ribose 1-phosphate. It catalyses the reaction adenosine + phosphate = alpha-D-ribose 1-phosphate + adenine. The enzyme catalyses cytidine + phosphate = cytosine + alpha-D-ribose 1-phosphate. The catalysed reaction is guanosine + phosphate = alpha-D-ribose 1-phosphate + guanine. It carries out the reaction inosine + phosphate = alpha-D-ribose 1-phosphate + hypoxanthine. It catalyses the reaction thymidine + phosphate = 2-deoxy-alpha-D-ribose 1-phosphate + thymine. The enzyme catalyses uridine + phosphate = alpha-D-ribose 1-phosphate + uracil. The catalysed reaction is xanthosine + phosphate = alpha-D-ribose 1-phosphate + xanthine. Catalyzes the phosphorolysis of diverse nucleosides, yielding D-ribose 1-phosphate and the respective free bases. Can use uridine, adenosine, guanosine, cytidine, thymidine, inosine and xanthosine as substrates. Also catalyzes the reverse reactions. This chain is Pyrimidine/purine nucleoside phosphorylase, found in Leptospira borgpetersenii serovar Hardjo-bovis (strain L550).